Here is a 447-residue protein sequence, read N- to C-terminus: Serine/threonine-protein phosphatase 2A 55 kDa regulatory subunit B delta isoform (447 aa).

WD repeat units follow at residues 26 to 65 (AEAD…KSRP), 91 to 132 (EIEE…KRVE), 175 to 213 (AHTY…RSFN), 224 to 264 (ELTE…LCDR), 283 to 321 (EIIS…RPVE), 338 to 379 (ENDC…DITL), and 414 to 447 (DFNK…DKVN).

This sequence belongs to the phosphatase 2A regulatory subunit B family. In terms of assembly, PP2A consists of a common heterodimeric core enzyme, composed of a 36 kDa catalytic subunit (subunit C) and a 65 kDa constant regulatory subunit (PR65 or subunit A), that associates with a variety of regulatory subunits. Proteins that associate with the core dimer include three families of regulatory subunits B (the R2/B/PR55/B55, R3/B''/PR72/PR130/PR59 and R5/B'/B56 families), the 48 kDa variable regulatory subunit, viral proteins, and cell signaling molecules. Interacts with ensa (when phosphorylated at 'Ser-67') and arpp19 (when phosphorylated at 'Ser-67'), leading to inhibit PP2A activity.

Its subcellular location is the cytoplasm. In terms of biological role, substrate-recognition subunit of protein phosphatase 2A (PP2A) that plays a key role in cell cycle by controlling mitosis entry and exit. The activity of PP2A complexes containing ppp2r2d (PR55-delta) fluctuate during the cell cycle: the activity is high in interphase and low in mitosis. During mitosis, activity of PP2A is inhibited via interaction with phosphorylated ensa and arpp19 inhibitors. PP2A complexes containing ppp2r2d (PR55-delta) also regulate the activity of TGF-beta/Activin/Nodal signaling by restricting receptor activity. Within the PP2A complexes, the B regulatory subunits modulate substrate selectivity and catalytic activity, and may also direct the localization of the catalytic enzyme to a particular subcellular compartment. The sequence is that of Serine/threonine-protein phosphatase 2A 55 kDa regulatory subunit B delta isoform (ppp2r2d) from Xenopus laevis (African clawed frog).